Here is a 490-residue protein sequence, read N- to C-terminus: Cytochrome P450 2C6 (490 aa).

K249 and K375 each carry N6-acetyllysine. C435 contributes to the heme binding site.

Belongs to the cytochrome P450 family. Heme serves as cofactor.

It is found in the endoplasmic reticulum membrane. The protein resides in the microsome membrane. The catalysed reaction is an organic molecule + reduced [NADPH--hemoprotein reductase] + O2 = an alcohol + oxidized [NADPH--hemoprotein reductase] + H2O + H(+). Its function is as follows. Cytochromes P450 are a group of heme-thiolate monooxygenases. In liver microsomes, this enzyme is involved in an NADPH-dependent electron transport pathway. It oxidizes a variety of structurally unrelated compounds, including steroids, fatty acids, and xenobiotics. In Rattus norvegicus (Rat), this protein is Cytochrome P450 2C6 (Cyp2c6).